The primary structure comprises 207 residues: Protein lin-7 homolog B (207 aa).

The short motif at Met1–Asp13 is the Kinase interacting site element. The region spanning Leu10–Gly65 is the L27 domain. The 83-residue stretch at Val93–Pro175 folds into the PDZ domain. Residues Lys187 to Gly207 form a disordered region. Residues His198 to Gly207 show a composition bias toward polar residues.

This sequence belongs to the lin-7 family. Forms a complex with CASK and CASKIN1. Component of the brain-specific heterotrimeric complex (LIN-10-LIN-2-LIN-7 complex) composed of at least APBA1, CASK, and LIN7, which associates with the motor protein KIF17 to transport vesicles along microtubules. Forms a heterotrimeric complex composed of MMP5, LIN7B and PATJ; the N-terminal L27 domain of PALS1 interacts with the L27 domain of PATJ and the C-terminal L27 domain of PALS1 interacts with the L27 domain of LIN7B. Forms a heterotrimeric complex with DLG1 and CASK via their L27 domains. Interacts with DLG4 and GRIN2B as well as CDH1 and CTNNB1, the channels KCNJ12/Kir2.2, KCNJ4/Kir2.3 and probably KCNJ2/Kir2.1 and SLC6A12/BGT-1 via its PDZ domain. The association of LIN7A with cadherin and beta-catenin is calcium-dependent, occurs at synaptic junctions and requires the actin cytoskeleton. Interacts with EGFR, ERBB2, ERBB3 and ERBB4 with both PDZ and KID domains. Associates with KIF17 via APBA1. Interacts with ASIC3. Interacts with TOPK. Interacts with RTKN. Interacts with APBA1. Interacts with MPP7. Interacts with DLG2. Interacts with DLG3. In terms of tissue distribution, expressed in the kidney; predominantly in the vasa recta.

It localises to the cell membrane. The protein resides in the basolateral cell membrane. It is found in the cell junction. The protein localises to the postsynaptic density membrane. Its subcellular location is the tight junction. Plays a role in establishing and maintaining the asymmetric distribution of channels and receptors at the plasma membrane of polarized cells. Forms membrane-associated multiprotein complexes that may regulate delivery and recycling of proteins to the correct membrane domains. The tripartite complex composed of LIN7 (LIN7A, LIN7B or LIN7C), CASK and APBA1 associates with the motor protein KIF17 to transport vesicles containing N-methyl-D-aspartate (NMDA) receptor subunit NR2B along microtubules. This complex may have the potential to couple synaptic vesicle exocytosis to cell adhesion in brain. Ensures the proper localization of GRIN2B (subunit 2B of the NMDA receptor) to neuronal postsynaptic density and may function in localizing synaptic vesicles at synapses where it is recruited by beta-catenin and cadherin. Required to localize Kir2 channels, GABA transporter (SLC6A12) and EGFR/ERBB1, ERBB2, ERBB3 and ERBB4 to the basolateral membrane of epithelial cells. May increase the amplitude of ASIC3 acid-evoked currents by stabilizing the channel at the cell surface. This Mus musculus (Mouse) protein is Protein lin-7 homolog B (Lin7b).